The sequence spans 244 residues: Small ribosomal subunit protein uS3 (244 aa).

The region spanning 39–107 (VREMLRKKLA…PAHINVTEVR (69 aa)) is the KH type-2 domain. The interval 213–244 (VGQEKQDDSPRNDRNDRGDRGDRPSRPAREAR) is disordered. The span at 216 to 244 (EKQDDSPRNDRNDRGDRGDRPSRPAREAR) shows a compositional bias: basic and acidic residues.

The protein belongs to the universal ribosomal protein uS3 family. As to quaternary structure, part of the 30S ribosomal subunit. Forms a tight complex with proteins S10 and S14.

In terms of biological role, binds the lower part of the 30S subunit head. Binds mRNA in the 70S ribosome, positioning it for translation. The chain is Small ribosomal subunit protein uS3 from Xanthomonas campestris pv. campestris (strain 8004).